A 304-amino-acid chain; its full sequence is Syntaxin-132 (304 aa).

Met1 carries the N-acetylmethionine modification. Positions 1 to 30 (MNDLLKGSFELPRGQSSREGDVELGEQQGG) are disordered. Residues 1 to 275 (MNDLLKGSFE…AKSLQKNSRK (275 aa)) lie on the Cytoplasmic side of the membrane. Coiled-coil stretches lie at residues 34–67 (LEDFFKKVQVIDKQYDKLDKLLKKLQASHEESKS) and 129–162 (TLSLKKKLKDKMAEFQVLRENIQQEYRDVVDRRV). Residues 204-266 (LAEIQERHDA…QSGNTALQRA (63 aa)) form the t-SNARE coiled-coil homology domain. A helical; Anchor for type IV membrane protein transmembrane segment spans residues 276–296 (WMCIAIIILLIVVAVIVVGVL). Over 297–304 (KPWKNKSA) the chain is Vesicular.

The protein belongs to the syntaxin family. Part of the t-SNARE complex. In terms of tissue distribution, widely expressed in all tissues throughout plant development.

The protein localises to the cell membrane. Functionally, vesicle trafficking protein that functions in the secretory pathway. Acts in coordination with SYP123 to mediate tip-focused membrane trafficking for root hair tip growth. Functions in root hair elongation by forming SNARE complexes with VAMP721,VAMP722 or VAMP724. Involved in cytokinesis. Acts as a cell plate-specific syntaxin, required for the fusion of vesicles at the plane of cell division. Required for secretory trafficking to the plasma membrane during interphase. Involved in the regulation of density of the H(+) ATPase proteins at the plasma membrane of root and shoot in epidermal cells. Modulation of SYP132 expression by auxin affects clathrin-sensitive H(+) ATPase traffic from the plasma membrane, and influences apoplastic acidification and plant growth. The protein is Syntaxin-132 of Arabidopsis thaliana (Mouse-ear cress).